Reading from the N-terminus, the 357-residue chain is Holliday junction branch migration complex subunit RuvB (357 aa).

The segment at 1–27 (MGRFSNADGPGDDADEREVTPALTVGE) is disordered. A large ATPase domain (RuvB-L) region spans residues 1-195 (MGRFSNADGP…FGFTAHMDFY (195 aa)). ATP is bound by residues Leu-34, Arg-35, Gly-76, Lys-79, Thr-80, Ser-81, 142–144 (EDF), Arg-185, Tyr-195, and Arg-232. Thr-80 lines the Mg(2+) pocket. A small ATPAse domain (RuvB-S) region spans residues 196 to 266 (EPAELERVLA…IAKYALEVYD (71 aa)). The interval 269–357 (ELGLDRLDRA…GGLGQVGLFE (89 aa)) is head domain (RuvB-H). DNA is bound by residues Arg-324 and Arg-329.

This sequence belongs to the RuvB family. As to quaternary structure, homohexamer. Forms an RuvA(8)-RuvB(12)-Holliday junction (HJ) complex. HJ DNA is sandwiched between 2 RuvA tetramers; dsDNA enters through RuvA and exits via RuvB. An RuvB hexamer assembles on each DNA strand where it exits the tetramer. Each RuvB hexamer is contacted by two RuvA subunits (via domain III) on 2 adjacent RuvB subunits; this complex drives branch migration. In the full resolvosome a probable DNA-RuvA(4)-RuvB(12)-RuvC(2) complex forms which resolves the HJ.

The protein localises to the cytoplasm. It catalyses the reaction ATP + H2O = ADP + phosphate + H(+). Functionally, the RuvA-RuvB-RuvC complex processes Holliday junction (HJ) DNA during genetic recombination and DNA repair, while the RuvA-RuvB complex plays an important role in the rescue of blocked DNA replication forks via replication fork reversal (RFR). RuvA specifically binds to HJ cruciform DNA, conferring on it an open structure. The RuvB hexamer acts as an ATP-dependent pump, pulling dsDNA into and through the RuvAB complex. RuvB forms 2 homohexamers on either side of HJ DNA bound by 1 or 2 RuvA tetramers; 4 subunits per hexamer contact DNA at a time. Coordinated motions by a converter formed by DNA-disengaged RuvB subunits stimulates ATP hydrolysis and nucleotide exchange. Immobilization of the converter enables RuvB to convert the ATP-contained energy into a lever motion, pulling 2 nucleotides of DNA out of the RuvA tetramer per ATP hydrolyzed, thus driving DNA branch migration. The RuvB motors rotate together with the DNA substrate, which together with the progressing nucleotide cycle form the mechanistic basis for DNA recombination by continuous HJ branch migration. Branch migration allows RuvC to scan DNA until it finds its consensus sequence, where it cleaves and resolves cruciform DNA. In Mycolicibacterium gilvum (strain PYR-GCK) (Mycobacterium gilvum (strain PYR-GCK)), this protein is Holliday junction branch migration complex subunit RuvB.